Reading from the N-terminus, the 79-residue chain is Small ribosomal subunit protein bS18 (79 aa).

The protein belongs to the bacterial ribosomal protein bS18 family. As to quaternary structure, part of the 30S ribosomal subunit. Forms a tight heterodimer with protein bS6.

Binds as a heterodimer with protein bS6 to the central domain of the 16S rRNA, where it helps stabilize the platform of the 30S subunit. This is Small ribosomal subunit protein bS18 from Streptococcus suis (strain 98HAH33).